We begin with the raw amino-acid sequence, 117 residues long: 3',5'-cyclic-AMP phosphodiesterase 4A (117 aa).

Residues 42-79 (KQNEVEIPSPTMKDREPQEAPRQRPCQQLPPPVPHLQP) form a disordered region. The span at 53 to 63 (MKDREPQEAPR) shows a compositional bias: basic and acidic residues. Residues 78-117 (QPMSQITGVKRLSHNSGLNNASIPRFGVKTDQEELLAQEL) form a catalytic region.

The protein belongs to the cyclic nucleotide phosphodiesterase family. PDE4 subfamily. As to quaternary structure, interacts with LYN (via SH3 domain). Interacts with ARRB2. Zn(2+) serves as cofactor. It depends on Mg(2+) as a cofactor. Mn(2+) is required as a cofactor. Proteolytically cleaved by CASP3.

The protein resides in the cytoplasm. It localises to the cytosol. Its subcellular location is the membrane. The enzyme catalyses 3',5'-cyclic AMP + H2O = AMP + H(+). Its pathway is purine metabolism; 3',5'-cyclic AMP degradation; AMP from 3',5'-cyclic AMP: step 1/1. Its function is as follows. Hydrolyzes the second messenger 3',5'-cyclic AMP (cAMP), which is a key regulator of many important physiological processes. The polypeptide is 3',5'-cyclic-AMP phosphodiesterase 4A (PDE4A) (Cavia porcellus (Guinea pig)).